Here is a 223-residue protein sequence, read N- to C-terminus: Cytochrome c biogenesis ATP-binding export protein CcmA (223 aa).

The ABC transporter domain maps to 1-223 (MRSLACERDE…KSDMAVGNDY (223 aa)). 31-38 (GSNGAGKT) is a binding site for ATP.

This sequence belongs to the ABC transporter superfamily. CcmA exporter (TC 3.A.1.107) family. The complex is composed of two ATP-binding proteins (CcmA) and two transmembrane proteins (CcmB).

It localises to the cell inner membrane. The catalysed reaction is heme b(in) + ATP + H2O = heme b(out) + ADP + phosphate + H(+). In terms of biological role, part of the ABC transporter complex CcmAB involved in the biogenesis of c-type cytochromes; once thought to export heme, this seems not to be the case, but its exact role is uncertain. Responsible for energy coupling to the transport system. The sequence is that of Cytochrome c biogenesis ATP-binding export protein CcmA from Saccharophagus degradans (strain 2-40 / ATCC 43961 / DSM 17024).